A 261-amino-acid chain; its full sequence is Enolase-phosphatase E1 (261 aa).

Positions 16 and 18 each coordinate Mg(2+). Residues 153-154 (SS) and Lys-187 each bind substrate. Asp-212 is a Mg(2+) binding site.

This sequence belongs to the HAD-like hydrolase superfamily. MasA/MtnC family. Monomer. It depends on Mg(2+) as a cofactor.

Its subcellular location is the cytoplasm. It localises to the nucleus. It carries out the reaction 5-methylsulfanyl-2,3-dioxopentyl phosphate + H2O = 1,2-dihydroxy-5-(methylsulfanyl)pent-1-en-3-one + phosphate. It participates in amino-acid biosynthesis; L-methionine biosynthesis via salvage pathway; L-methionine from S-methyl-5-thio-alpha-D-ribose 1-phosphate: step 3/6. The protein operates within amino-acid biosynthesis; L-methionine biosynthesis via salvage pathway; L-methionine from S-methyl-5-thio-alpha-D-ribose 1-phosphate: step 4/6. Its function is as follows. Bifunctional enzyme that catalyzes the enolization of 2,3-diketo-5-methylthiopentyl-1-phosphate (DK-MTP-1-P) into the intermediate 2-hydroxy-3-keto-5-methylthiopentenyl-1-phosphate (HK-MTPenyl-1-P), which is then dephosphorylated to form the acireductone 1,2-dihydroxy-3-keto-5-methylthiopentene (DHK-MTPene). This chain is Enolase-phosphatase E1, found in Homo sapiens (Human).